A 1024-amino-acid polypeptide reads, in one-letter code: MFYAELFCQSNFSFLTGASHPEELIVQANFLGYHSLAITDECSLAGIVRAHSAIKQHQLSVKQIVGSFFKLNTECQFVLLCPNREAYAELCRIITNARRRCEKGQYQLSQWDVMSLKHCLLIWLPTGQTSDEQWATWLSRYQQSRLWLGLQRHLRHDDEHYLHHCQTLANQFDLPITACGGVLMHRPERLPLQHTLTAIRHGCTVEQLGTQLLTNAEQSLRSEKKLRKLFKPQWLAESLYIASLCSFDLDSLRYEYPSELIPDGYTPDSYLEHLVEQGKKLRFPEGVPDAIEQTIQKELALIKEQKYPFFFLTIHDIVMFAKQQGILYQGRGSAANSVVCYCLQITSVDPRQIAVLFERFISKERDEPPDIDVDFEHERREEVIQYIYQKYGRQRAALAATVISYRFKSAVRQVGKALGIEETQLDFFLKNINRRDRQAGWQAQLVELGLQPDSLKGQHFIQLVEEIIGFPRHLSQHVGGFVISSGPLYELVPVENAAMPERTIIQWDKDDLESLKLLKVDVLSLGMLTAIRKCFLSIEQHHQQRLSIADITRRQDDQAVYKMIQKADTIGVFQIESRAQMSMLPRLKPACYYDLVIQIAIVRPGPIQGDMVHPFLKRRDGEEPISYPSVHVQEVLERTLGVPIFQEQVIKLAMVAAGFSGGEADQLRRAMAAWKKNGHVFKFKTKLINGMLERGYELDFAERIFEQICGFGEYGFPESHSASFAVLAYCSAWLKHYYPAEFYTALLNSQPMGFYSPSQLVQDAKRHGIAVLPICVNFSNAEHQLVRLTSGELAIRLGFNLIKGLSHEGITRLLTHRPAQGYQCISEVKQILRQAKDIQSLASANAFYQLADNRYLARWQVMDNLDELPLFQTLPSISNNPLPKPSDYQNVLEDYAATGLSLAEHPVAMLEKAGGLTRFTRANQLNQCSHRSLVTVIGLVTGKQSPGTAAGVTFFTLEDDTGNINVVVWQATSRAQKQAYLTARLLMVKGILEREGDVIHVIAGRLIDLTEKLSGLSPKSREFH.

The protein belongs to the DNA polymerase type-C family. DnaE2 subfamily.

The protein localises to the cytoplasm. It carries out the reaction DNA(n) + a 2'-deoxyribonucleoside 5'-triphosphate = DNA(n+1) + diphosphate. In terms of biological role, DNA polymerase involved in damage-induced mutagenesis and translesion synthesis (TLS). It is not the major replicative DNA polymerase. The chain is Error-prone DNA polymerase from Vibrio vulnificus (strain CMCP6).